The sequence spans 614 residues: Vitamin B12 transporter BtuB (614 aa).

A signal peptide spans 1 to 20 (MIKKASLLTACSVTAFSAWA). The short motif at 26–33 (DTLVVTAN) is the TonB box element. The TBDR plug domain maps to 38 to 152 (PRSTVLAPTT…IGGVVNIITT (115 aa)). Residues Leu83, Ser85, Asn92, and 110–111 (VS) each bind cyanocob(III)alamin. The TBDR beta-barrel domain occupies 155-614 (HPGTEISAGW…EYTLSGSYTF (460 aa)). Beta stranded transmembrane passes span 158 to 165 (TEISAGWG), 169 to 178 (YQNYDVSTQQ), and 184 to 195 (TRVTLLGDYAHT). 4 residues coordinate Ca(2+): Asp199, Gln211, Asp213, and Asp215. 2 consecutive transmembrane segments (beta stranded) span residues 217-227 (FLSKTLYGALE) and 232-248 (DVWSGFVRGYGYDNRTN). 2 residues coordinate Ca(2+): Tyr249 and Asp250. Ala251 is a binding site for cyanocob(III)alamin. Ca(2+) is bound at residue Asp261. Beta stranded transmembrane passes span 263 to 277 (RKLYSQSWDAGLRYN), 279 to 296 (ELIKSQLITSYSHSKDYN), 309 to 325 (TLDEMKQYTVQWANNII), 328 to 337 (HGNIGAGVDW), 353 to 369 (YDQRNTGIYLTGLQQVG), 371 to 381 (FTFEGAGRSDD), 385 to 400 (FGRHGTWQTSAGWEFI), 403 to 417 (YRFIASYGTSYKAPN), 434 to 443 (KSKQWEGAFE), 449 to 458 (VNWRISGYRN), 473 to 490 (YYNEGKARIKGVEATANF), 494 to 509 (PLTHTVSYDYVDARNA), 517 to 529 (RRAKQQVKYQLDW), and 535 to 550 (DWGITYQYLGTRYDKD). Thr309 is a binding site for cyanocob(III)alamin. A cyanocob(III)alamin-binding site is contributed by Arg517. Tyr551 contacts cyanocob(III)alamin. Beta stranded transmembrane passes span 558-572 (TVKMGGVSLWDLAVA), 585-596 (IANLFDKDYETV), and 602-614 (AGREYTLSGSYTF). The TonB C-terminal box signature appears at 597 to 614 (YGYQTAGREYTLSGSYTF).

Belongs to the TonB-dependent receptor family. BtuB (TC 1.B.14.3.1) subfamily.

It localises to the cell outer membrane. In terms of biological role, involved in the active translocation of vitamin B12 (cyanocobalamin) across the outer membrane to the periplasmic space. It derives its energy for transport by interacting with the trans-periplasmic membrane protein TonB. The chain is Vitamin B12 transporter BtuB from Escherichia coli O6:K15:H31 (strain 536 / UPEC).